A 194-amino-acid chain; its full sequence is Inosine triphosphate pyrophosphatase (194 aa).

Position 11–16 (11–16) interacts with ITP; the sequence is TGNAKK. Glu-39 contributes to the Mg(2+) binding site. ITP-binding positions include Lys-51, 67-68, Lys-84, 143-146, Lys-166, and 171-172; these read DT, FGWD, and HR.

It belongs to the HAM1 NTPase family. In terms of assembly, homodimer. It depends on Mg(2+) as a cofactor. Mn(2+) is required as a cofactor.

It is found in the cytoplasm. It catalyses the reaction ITP + H2O = IMP + diphosphate + H(+). It carries out the reaction dITP + H2O = dIMP + diphosphate + H(+). The enzyme catalyses XTP + H2O = XMP + diphosphate + H(+). Pyrophosphatase that hydrolyzes non-canonical purine nucleotides such as inosine triphosphate (ITP), deoxyinosine triphosphate (dITP) or xanthosine 5'-triphosphate (XTP) to their respective monophosphate derivatives. The enzyme does not distinguish between the deoxy- and ribose forms. Probably excludes non-canonical purines from RNA and DNA precursor pools, thus preventing their incorporation into RNA and DNA and avoiding chromosomal lesions. The polypeptide is Inosine triphosphate pyrophosphatase (itpa) (Dictyostelium discoideum (Social amoeba)).